A 176-amino-acid chain; its full sequence is MFFHIVLERNMQLHPRFFGRNLKENLVSKLMKDVEGTCSGRHGFVVAITGIDTIGKGLIRDGTGFVTFPVKYQCVVFRPFKGEILEAVVTLVNKMGFFAEAGPVQIFVSKHLIPDDMEFQAGDMPNYTTSDGSVKIQKECEVRLKIIGTRVDATAIFCVGTIKDDFLGVINDPAAA.

The protein belongs to the eukaryotic RPB7/RPC8 RNA polymerase subunit family. In terms of assembly, component of the RNA polymerase II complex consisting of at least 12 subunits. Interacts with NRPB4.

It is found in the nucleus. DNA-dependent RNA polymerase catalyzes the transcription of DNA into RNA using the four ribonucleoside triphosphates as substrates. Component of RNA polymerase II which synthesizes mRNA precursors and many functional non-coding RNAs. Pol II is the central component of the basal RNA polymerase II transcription machinery. It is composed of mobile elements that move relative to each other. NRPB7 is part of a subcomplex with NRPB4 that binds to a pocket formed by NRPB1, NRPB2 and NRPB6 at the base of the clamp element. The NRBP4-NRPB7 subcomplex seems to lock the clamp via NRPB7 in the closed conformation thus preventing double-stranded DNA to enter the active site cleft. The NRPB4-NRPB7 subcomplex binds single-stranded DNA and RNA. The protein is DNA-directed RNA polymerase II subunit 7 (NRPB7) of Arabidopsis thaliana (Mouse-ear cress).